Consider the following 186-residue polypeptide: ATP synthase subunit delta (186 aa).

This sequence belongs to the ATPase delta chain family. F-type ATPases have 2 components, F(1) - the catalytic core - and F(0) - the membrane proton channel. F(1) has five subunits: alpha(3), beta(3), gamma(1), delta(1), epsilon(1). F(0) has three main subunits: a(1), b(2) and c(10-14). The alpha and beta chains form an alternating ring which encloses part of the gamma chain. F(1) is attached to F(0) by a central stalk formed by the gamma and epsilon chains, while a peripheral stalk is formed by the delta and b chains.

It is found in the cell membrane. In terms of biological role, f(1)F(0) ATP synthase produces ATP from ADP in the presence of a proton or sodium gradient. F-type ATPases consist of two structural domains, F(1) containing the extramembraneous catalytic core and F(0) containing the membrane proton channel, linked together by a central stalk and a peripheral stalk. During catalysis, ATP synthesis in the catalytic domain of F(1) is coupled via a rotary mechanism of the central stalk subunits to proton translocation. Its function is as follows. This protein is part of the stalk that links CF(0) to CF(1). It either transmits conformational changes from CF(0) to CF(1) or is implicated in proton conduction. This is ATP synthase subunit delta from Wolbachia sp. subsp. Brugia malayi (strain TRS).